Consider the following 156-residue polypeptide: Interleukin-36 receptor antagonist protein (156 aa).

A disulfide bridge links C9 with C155.

Belongs to the IL-1 family. Interacts with cargo receptor TMED10; the interaction mediates the translocation from the cytoplasm into the ERGIC (endoplasmic reticulum-Golgi intermediate compartment) and thereby secretion. Post-translationally, removal of N-terminal methionine is necessary for full antagonistic activity. Highly abundant in embryonic tissue and tissues containing epithelial cells.

Its subcellular location is the cytoplasm. It localises to the secreted. Inhibits the activity of interleukin-36 (IL36A,IL36B and IL36G) by binding to receptor IL1RL2/IL-36R and preventing its association with the coreceptor IL1RAP for signaling. Part of the IL-36 signaling system that is thought to be present in epithelial barriers and to take part in local inflammatory response; similar to the IL-1 system with which it shares the coreceptor. Proposed to play a role in skin inflammation. May be involved in the innate immune response to fungal pathogens. May activate an anti-inflammatory signaling pathway by recruiting SIGIRR. The sequence is that of Interleukin-36 receptor antagonist protein from Mus musculus (Mouse).